The following is a 249-amino-acid chain: 5'-nucleotidase SurE (249 aa).

A divalent metal cation-binding residues include aspartate 8, aspartate 9, serine 39, and asparagine 91.

This sequence belongs to the SurE nucleotidase family. A divalent metal cation serves as cofactor.

Its subcellular location is the cytoplasm. It carries out the reaction a ribonucleoside 5'-phosphate + H2O = a ribonucleoside + phosphate. Nucleotidase that shows phosphatase activity on nucleoside 5'-monophosphates. This chain is 5'-nucleotidase SurE, found in Pseudomonas entomophila (strain L48).